The following is a 304-amino-acid chain: Elongation factor Ts (304 aa).

Residues 79-82 are involved in Mg(2+) ion dislocation from EF-Tu; that stretch reads TDFV.

The protein belongs to the EF-Ts family.

Its subcellular location is the cytoplasm. Functionally, associates with the EF-Tu.GDP complex and induces the exchange of GDP to GTP. It remains bound to the aminoacyl-tRNA.EF-Tu.GTP complex up to the GTP hydrolysis stage on the ribosome. In Polaromonas sp. (strain JS666 / ATCC BAA-500), this protein is Elongation factor Ts.